The following is a 302-amino-acid chain: Small ribosomal subunit protein uS2 (302 aa).

The tract at residues 275-302 (EGEGESEAEPVVAKKKPVRAKRPAVKAE) is disordered. Positions 287 to 302 (AKKKPVRAKRPAVKAE) are enriched in basic residues.

Belongs to the universal ribosomal protein uS2 family.

This Opitutus terrae (strain DSM 11246 / JCM 15787 / PB90-1) protein is Small ribosomal subunit protein uS2.